The sequence spans 434 residues: Enolase (434 aa).

Q166 serves as a coordination point for (2R)-2-phosphoglycerate. E208 acts as the Proton donor in catalysis. Residues D245, E290, and D317 each contribute to the Mg(2+) site. 4 residues coordinate (2R)-2-phosphoglycerate: K342, R371, S372, and K393. K342 functions as the Proton acceptor in the catalytic mechanism.

It belongs to the enolase family. It depends on Mg(2+) as a cofactor.

Its subcellular location is the cytoplasm. The protein localises to the secreted. It is found in the cell surface. The enzyme catalyses (2R)-2-phosphoglycerate = phosphoenolpyruvate + H2O. It participates in carbohydrate degradation; glycolysis; pyruvate from D-glyceraldehyde 3-phosphate: step 4/5. Functionally, catalyzes the reversible conversion of 2-phosphoglycerate (2-PG) into phosphoenolpyruvate (PEP). It is essential for the degradation of carbohydrates via glycolysis. The chain is Enolase from Caldicellulosiruptor saccharolyticus (strain ATCC 43494 / DSM 8903 / Tp8T 6331).